The following is a 335-amino-acid chain: UPF0353 protein MUL_1490 (335 aa).

A run of 2 helical transmembrane segments spans residues Trp-18 to Leu-38 and Ile-67 to Thr-87. Residues Val-98–Ile-298 form the VWFA domain. The chain crosses the membrane as a helical span at residues Met-309–Ile-329.

Belongs to the UPF0353 family.

It is found in the cell membrane. This is UPF0353 protein MUL_1490 from Mycobacterium ulcerans (strain Agy99).